The chain runs to 353 residues: 4-hydroxy-2-oxovalerate aldolase 2 (353 aa).

The region spanning 14–266 (VRMTDTSLRD…KTGIDFFDIA (253 aa)) is the Pyruvate carboxyltransferase domain. Residue 22-23 (RD) coordinates substrate. D23 is a Mn(2+) binding site. H26 acts as the Proton acceptor in catalysis. Substrate-binding residues include S176 and H205. Positions 205 and 207 each coordinate Mn(2+). Residue Y296 coordinates substrate.

Belongs to the 4-hydroxy-2-oxovalerate aldolase family.

It carries out the reaction (S)-4-hydroxy-2-oxopentanoate = acetaldehyde + pyruvate. In Mycobacterium sp. (strain JLS), this protein is 4-hydroxy-2-oxovalerate aldolase 2.